The sequence spans 179 residues: Large ribosomal subunit protein uL5 (179 aa).

Belongs to the universal ribosomal protein uL5 family. In terms of assembly, part of the 50S ribosomal subunit; part of the 5S rRNA/L5/L18/L25 subcomplex. Contacts the 5S rRNA and the P site tRNA. Forms a bridge to the 30S subunit in the 70S ribosome.

Its function is as follows. This is one of the proteins that bind and probably mediate the attachment of the 5S RNA into the large ribosomal subunit, where it forms part of the central protuberance. In the 70S ribosome it contacts protein S13 of the 30S subunit (bridge B1b), connecting the 2 subunits; this bridge is implicated in subunit movement. Contacts the P site tRNA; the 5S rRNA and some of its associated proteins might help stabilize positioning of ribosome-bound tRNAs. This is Large ribosomal subunit protein uL5 from Ruthia magnifica subsp. Calyptogena magnifica.